Consider the following 361-residue polypeptide: Chorismate synthase (361 aa).

Arginine 48 and arginine 54 together coordinate NADP(+). FMN contacts are provided by residues 125–127 (RSS), 238–239 (NA), glycine 278, 293–297 (KPTSS), and arginine 319.

This sequence belongs to the chorismate synthase family. Homotetramer. The cofactor is FMNH2.

It catalyses the reaction 5-O-(1-carboxyvinyl)-3-phosphoshikimate = chorismate + phosphate. It participates in metabolic intermediate biosynthesis; chorismate biosynthesis; chorismate from D-erythrose 4-phosphate and phosphoenolpyruvate: step 7/7. Its function is as follows. Catalyzes the anti-1,4-elimination of the C-3 phosphate and the C-6 proR hydrogen from 5-enolpyruvylshikimate-3-phosphate (EPSP) to yield chorismate, which is the branch point compound that serves as the starting substrate for the three terminal pathways of aromatic amino acid biosynthesis. This reaction introduces a second double bond into the aromatic ring system. The protein is Chorismate synthase of Salmonella dublin (strain CT_02021853).